The primary structure comprises 146 residues: Hemoglobin subunit beta (146 aa).

Valine 1 is subject to N-acetylvaline. One can recognise a Globin domain in the interval 2–146 (HLTADEKAAV…VANALAHKYH (145 aa)). Phosphothreonine is present on threonine 12. Serine 44 is modified (phosphoserine). N6-acetyllysine is present on lysine 59. Histidine 63 contributes to the heme b binding site. Position 82 is an N6-acetyllysine (lysine 82). Heme b is bound at residue histidine 92. Cysteine 93 carries the S-nitrosocysteine modification. At lysine 144 the chain carries N6-acetyllysine.

The protein belongs to the globin family. In terms of assembly, heterotetramer of two alpha chains and two beta chains. Red blood cells.

In terms of biological role, involved in oxygen transport from the lung to the various peripheral tissues. The protein is Hemoglobin subunit beta (HBB) of Odobenus rosmarus divergens (Pacific walrus).